We begin with the raw amino-acid sequence, 165 residues long: Pyruvoyl-dependent arginine decarboxylase (165 aa).

The residue at position 53 (S53) is a Pyruvic acid (Ser).

This sequence belongs to the PdaD family. Requires pyruvate as cofactor.

The enzyme catalyses L-arginine + H(+) = agmatine + CO2. This Methanococcus aeolicus (strain ATCC BAA-1280 / DSM 17508 / OCM 812 / Nankai-3) protein is Pyruvoyl-dependent arginine decarboxylase.